Here is an 88-residue protein sequence, read N- to C-terminus: Small ribosomal subunit protein bS20 (88 aa).

It belongs to the bacterial ribosomal protein bS20 family.

In terms of biological role, binds directly to 16S ribosomal RNA. The polypeptide is Small ribosomal subunit protein bS20 (Bacillus licheniformis (strain ATCC 14580 / DSM 13 / JCM 2505 / CCUG 7422 / NBRC 12200 / NCIMB 9375 / NCTC 10341 / NRRL NRS-1264 / Gibson 46)).